The following is a 232-amino-acid chain: Dehydrogenase OXI1 (232 aa).

Positions 1–20 (MTETFKVAITFVSPSSEALA) are cleaved as a signal peptide. An NADP(+)-binding site is contributed by Leu19. Asn28 carries N-linked (GlcNAc...) asparagine glycosylation. 3 residues coordinate NADP(+): Asp42, Asn70, and Lys103. Residue Asn117 is glycosylated (N-linked (GlcNAc...) asparagine). Residues Ser119 and Ser121 each act as proton donor in the active site. The NADP(+) site is built by Tyr133, Lys137, and Thr168. The Proton acceptor role is filled by Tyr133. Lys137 acts as the Lowers pKa of active site Tyr in catalysis.

This sequence belongs to the short-chain dehydrogenases/reductases (SDR) family.

It catalyses the reaction a primary alcohol + NAD(+) = an aldehyde + NADH + H(+). The catalysed reaction is a secondary alcohol + NAD(+) = a ketone + NADH + H(+). The protein operates within mycotoxin biosynthesis. Functionally, dehydrogenase; part of the Tox1A locus, one of the 2 loci that mediate the biosynthesis of T-toxin, a family of linear polyketides 37 to 45 carbons in length, of which the major component is 41 carbons, and which leads to high virulence to maize. One of the PKSs (PKS1 or PKS2) could synthesize a precursor, used subsequently by the other PKS as starter unit, to add additional carbons. Variability in the length of the final carbon backbone C35-47 could be achieved by varying the number of condensation cycles, or use of different starter or extender units or might be due to decarboxylation of the penultimate product, catalyzed by DEC1. Additional proteins are required for the biosynthesis of T-toxin, including oxidoreductases RED1, RED2, RED3, LAM1 and OXI1, as well as esterase TOX9. This Cochliobolus heterostrophus (strain C4 / ATCC 48331 / race T) (Southern corn leaf blight fungus) protein is Dehydrogenase OXI1.